We begin with the raw amino-acid sequence, 281 residues long: Bifunctional protein FolD (281 aa).

Residue 163–165 (GRS) coordinates NADP(+).

It belongs to the tetrahydrofolate dehydrogenase/cyclohydrolase family. Homodimer.

The catalysed reaction is (6R)-5,10-methylene-5,6,7,8-tetrahydrofolate + NADP(+) = (6R)-5,10-methenyltetrahydrofolate + NADPH. It carries out the reaction (6R)-5,10-methenyltetrahydrofolate + H2O = (6R)-10-formyltetrahydrofolate + H(+). The protein operates within one-carbon metabolism; tetrahydrofolate interconversion. Functionally, catalyzes the oxidation of 5,10-methylenetetrahydrofolate to 5,10-methenyltetrahydrofolate and then the hydrolysis of 5,10-methenyltetrahydrofolate to 10-formyltetrahydrofolate. The polypeptide is Bifunctional protein FolD (Leuconostoc mesenteroides subsp. mesenteroides (strain ATCC 8293 / DSM 20343 / BCRC 11652 / CCM 1803 / JCM 6124 / NCDO 523 / NBRC 100496 / NCIMB 8023 / NCTC 12954 / NRRL B-1118 / 37Y)).